A 174-amino-acid chain; its full sequence is Nicotinamide-nucleotide adenylyltransferase (174 aa).

It belongs to the archaeal NMN adenylyltransferase family.

The protein resides in the cytoplasm. It carries out the reaction beta-nicotinamide D-ribonucleotide + ATP + H(+) = diphosphate + NAD(+). Its pathway is cofactor biosynthesis; NAD(+) biosynthesis; NAD(+) from nicotinamide D-ribonucleotide: step 1/1. This is Nicotinamide-nucleotide adenylyltransferase from Methanospirillum hungatei JF-1 (strain ATCC 27890 / DSM 864 / NBRC 100397 / JF-1).